The chain runs to 210 residues: Chloramphenicol acetyltransferase (210 aa).

The active site involves His79.

The protein belongs to the transferase hexapeptide repeat family.

The catalysed reaction is chloramphenicol + acetyl-CoA = chloramphenicol 3-acetate + CoA. This enzyme is an effector of chloramphenicol resistance in bacteria. This Klebsiella aerogenes (Enterobacter aerogenes) protein is Chloramphenicol acetyltransferase (catB4).